The primary structure comprises 357 residues: DNA primase small subunit PriS (357 aa).

Active-site residues include Asp-105, Asp-107, and Asp-259.

Belongs to the eukaryotic-type primase small subunit family. Heterodimer of a small subunit (PriS) and a large subunit (PriL). The cofactor is Mg(2+). Mn(2+) serves as cofactor.

In terms of biological role, catalytic subunit of DNA primase, an RNA polymerase that catalyzes the synthesis of short RNA molecules used as primers for DNA polymerase during DNA replication. The small subunit contains the primase catalytic core and has DNA synthesis activity on its own. Binding to the large subunit stabilizes and modulates the activity, increasing the rate of DNA synthesis while decreasing the length of the DNA fragments, and conferring RNA synthesis capability. The DNA polymerase activity may enable DNA primase to also catalyze primer extension after primer synthesis. May also play a role in DNA repair. This is DNA primase small subunit PriS from Methanococcus maripaludis (strain C6 / ATCC BAA-1332).